A 677-amino-acid chain; its full sequence is Vertnin (677 aa).

Disordered stretches follow at residues 356–376 (GSTG…SSPE) and 458–490 (HSGS…KLSP). The segment covering 458-472 (HSGSSEEGSDADKSQ) has biased composition (basic and acidic residues).

It belongs to the vertnin family.

The protein resides in the nucleus. Functionally, functions as a transcriptional repressor that modulates bmp2b expression during dorsoventral patterning. The protein is Vertnin (vrtn) of Danio rerio (Zebrafish).